Consider the following 2947-residue polypeptide: 3'-5' exoribonuclease HELZ2 (2947 aa).

Residues 85-114 (PMRYQVCHYYRPGLGCRRHWNRCTFARSPE) form a C3H1-type 1 zinc finger. The C2H2-type zinc finger occupies 167-187 (CFTCCPPCLCPVDPRGHCPKH). The segment at 221 to 245 (YCMYVGRGVPCRHGASRCEYAHSAV) adopts a C3H1-type 2 zinc-finger fold. A C2H2-type; atypical zinc finger spans residues 289–311 (CHACLVTCNSQEAFENHCSSLEH). The UvrD-like helicase ATP-binding domain maps to 769-1317 (VGLIAGRRPE…ELLDESQQVT (549 aa)). 790 to 797 (GPFGTGKT) provides a ligand contact to ATP. The tract at residues 809 to 1290 (QQPHTKVLIC…GGMSEEDSES (482 aa)) is interaction with THRAP3. The DEAA box signature appears at 913 to 916 (DEAA). The tract at residues 1260–1292 (EDTASGNSASRDAAAEVSTLEGGMSEEDSESDF) is disordered. 4 short sequence motifs (LXXLL motif) span residues 1306 to 1310 (LKELL), 1348 to 1352 (LWKFL), 1403 to 1407 (LVQIL), and 2240 to 2244 (LEGLP). Omega-N-methylarginine is present on Arg2381. The interval 2413 to 2947 (PEPCRGNWPR…RVQRKSALSS (535 aa)) is interaction with THRAP3. Residues 2449–2726 (LNQSQDRAVR…IMLDTQYRMH (278 aa)) form the UvrD-like helicase ATP-binding 2 domain. Position 2470–2477 (2470–2477 (GPPGTGKT)) interacts with ATP. The short motif at 2525 to 2529 (LGGLL) is the LXXLL motif 5 element.

It belongs to the DNA2/NAM7 helicase family. Interacts with PPARA (via DNA-binding domain) and PPARG; the interaction stimulates the transcriptional activity of PPARA and PPARG. Interacts with THRAP3; the interaction is direct and HELZ2 and THRAP3 synergistically enhance the transcriptional activity of PPARG. It is probably part of the peroxisome proliferator activated receptor alpha interacting complex (PRIC).

It is found in the cytoplasm. It carries out the reaction Exonucleolytic cleavage in the 3'- to 5'-direction to yield nucleoside 5'-phosphates.. It catalyses the reaction ATP + H2O = ADP + phosphate + H(+). Can degrade highly structured RNAs through its concerted ATP-dependent RNA helicase and 3' to 5' exoribonuclease activities. Shows a strong preference for pyrimidine over purine residues for its nuclease activity. Acts as a transcriptional coactivator for a number of nuclear receptors including PPARA, PPARG, THRA, THRB and RXRA. The chain is 3'-5' exoribonuclease HELZ2 (Helz2) from Mus musculus (Mouse).